A 355-amino-acid chain; its full sequence is Arginine kinase (355 aa).

Residues 8-90 form the Phosphagen kinase N-terminal domain; sequence KLQAGFKKLE…FDPIIEDYHV (83 aa). 63–67 is an L-arginine binding site; it reads GVGIY. The Phosphagen kinase C-terminal domain occupies 118-355; sequence YVISTRVRCG…LQLIKMEKEM (238 aa). ATP contacts are provided by residues 121-125 and His-184; that span reads STRVR. Glu-224 lines the L-arginine pocket. Residue Arg-228 participates in ATP binding. An L-arginine-binding site is contributed by Cys-270. Residues 279–283 and 308–313 each bind ATP; these read RASVH and RGTRGE. Glu-313 is an L-arginine binding site.

Belongs to the ATP:guanido phosphotransferase family. In terms of assembly, monomer.

The enzyme catalyses L-arginine + ATP = N(omega)-phospho-L-arginine + ADP + H(+). The polypeptide is Arginine kinase (Penaeus japonicus (Kuruma prawn)).